A 419-amino-acid chain; its full sequence is Sulfate adenylyltransferase (419 aa).

It belongs to the sulfate adenylyltransferase family.

It catalyses the reaction sulfate + ATP + H(+) = adenosine 5'-phosphosulfate + diphosphate. The protein operates within sulfur metabolism; hydrogen sulfide biosynthesis; sulfite from sulfate: step 1/3. The chain is Sulfate adenylyltransferase from Psychrobacter sp. (strain PRwf-1).